The sequence spans 36 residues: Trypsin inhibitor 2 (36 aa).

3 disulfide bridges follow: cysteine 3–cysteine 20, cysteine 10–cysteine 24, and cysteine 19–cysteine 35.

Trypsin inhibitor. This Spinacia oleracea (Spinach) protein is Trypsin inhibitor 2.